A 153-amino-acid chain; its full sequence is Superoxide dismutase [Cu-Zn] (153 aa).

Residues H45, H47, and H62 each coordinate Cu cation. An intrachain disulfide couples C56 to C145. Zn(2+)-binding residues include H62, H70, H79, and D82. Residue H119 coordinates Cu cation.

Belongs to the Cu-Zn superoxide dismutase family. As to quaternary structure, homodimer. Requires Cu cation as cofactor. It depends on Zn(2+) as a cofactor.

The protein resides in the cytoplasm. The enzyme catalyses 2 superoxide + 2 H(+) = H2O2 + O2. Destroys radicals which are normally produced within the cells and which are toxic to biological systems. This chain is Superoxide dismutase [Cu-Zn], found in Drosophila virilis (Fruit fly).